The primary structure comprises 266 residues: Translation initiation factor 2 subunit alpha (266 aa).

Residues 12–83 (GEILIATVKQ…RKGTVDVSLK (72 aa)) form the S1 motif domain.

It belongs to the eIF-2-alpha family. In terms of assembly, heterotrimer composed of an alpha, a beta and a gamma chain.

Its function is as follows. eIF-2 functions in the early steps of protein synthesis by forming a ternary complex with GTP and initiator tRNA. This chain is Translation initiation factor 2 subunit alpha, found in Saccharolobus islandicus (strain Y.N.15.51 / Yellowstone #2) (Sulfolobus islandicus).